Here is a 515-residue protein sequence, read N- to C-terminus: 2,3-bisphosphoglycerate-independent phosphoglycerate mutase (515 aa).

Mn(2+)-binding residues include Asp-14 and Ser-64. The Phosphoserine intermediate role is filled by Ser-64. Substrate is bound by residues His-125, 155–156 (RD), Arg-187, Arg-193, 263–266 (RADR), and Lys-337. Residues Asp-404, His-408, Asp-445, His-446, and His-464 each contribute to the Mn(2+) site.

The protein belongs to the BPG-independent phosphoglycerate mutase family. In terms of assembly, monomer. The cofactor is Mn(2+).

The catalysed reaction is (2R)-2-phosphoglycerate = (2R)-3-phosphoglycerate. It participates in carbohydrate degradation; glycolysis; pyruvate from D-glyceraldehyde 3-phosphate: step 3/5. Its function is as follows. Catalyzes the interconversion of 2-phosphoglycerate and 3-phosphoglycerate. This is 2,3-bisphosphoglycerate-independent phosphoglycerate mutase from Yersinia pestis bv. Antiqua (strain Antiqua).